The primary structure comprises 79 residues: Short neurotoxin 8 (79 aa).

The signal sequence occupies residues 1-21 (MKTLLLTLVMVTIMCLDLGYT). Intrachain disulfides connect Cys-24–Cys-41, Cys-34–Cys-59, Cys-63–Cys-71, and Cys-72–Cys-77.

The protein belongs to the three-finger toxin family. Short-chain subfamily. Type III alpha-neurotoxin sub-subfamily. Expressed by the venom gland.

It is found in the secreted. In terms of biological role, binds with high affinity to muscle nicotinic acetylcholine receptor (nAChR) and hinders acetylcholine binding to the receptor, thereby impairing neuromuscular transmission. Causes muscle paralysis, spasms and increased respiration. This is Short neurotoxin 8 from Pseudonaja textilis (Eastern brown snake).